We begin with the raw amino-acid sequence, 427 residues long: Gamma-glutamyl phosphate reductase (427 aa).

This sequence belongs to the gamma-glutamyl phosphate reductase family.

It localises to the cytoplasm. The catalysed reaction is L-glutamate 5-semialdehyde + phosphate + NADP(+) = L-glutamyl 5-phosphate + NADPH + H(+). It participates in amino-acid biosynthesis; L-proline biosynthesis; L-glutamate 5-semialdehyde from L-glutamate: step 2/2. In terms of biological role, catalyzes the NADPH-dependent reduction of L-glutamate 5-phosphate into L-glutamate 5-semialdehyde and phosphate. The product spontaneously undergoes cyclization to form 1-pyrroline-5-carboxylate. The sequence is that of Gamma-glutamyl phosphate reductase from Bifidobacterium adolescentis (strain ATCC 15703 / DSM 20083 / NCTC 11814 / E194a).